The primary structure comprises 1374 residues: F-actin-uncapping protein LRRC16A (1374 aa).

Met-1 carries the N-acetylmethionine modification. Ser-122 is modified (phosphoserine). 10 LRR repeats span residues 245 to 269 (SNRL…LAGA), 275 to 298 (NSGL…SLSI), 304 to 327 (PKGL…SLCQ), 336 to 363 (ASTL…FLAQ), 391 to 418 (LQCL…SFKQ), 423 to 447 (SLAL…LLLG), 485 to 510 (IHNI…VWLS), 547 to 570 (DSPL…IINA), 574 to 597 (NTSL…MLAK), and 658 to 682 (LQKI…AYRL). Positions 714 to 738 (GDAIQEDLKAAERLMRDAKNSKTLL) form a coiled coil. At Thr-920 the chain carries Phosphothreonine. 2 disordered regions span residues 961-982 (PFPS…PSEE) and 1040-1374 (KMDC…FIFV). An LRR 11 repeat occupies 962–985 (FPSVRQEKRSSGLISELPSEEGRR). Residues 962 to 1084 (FPSVRQEKRS…LIKSRSRSER (123 aa)) are inhibits capping activity of CP. Ser-972 is modified (phosphoserine). Residues 1040–1064 (KMDCKRSSSRSSDAHELGEGDEKKK) show a composition bias toward basic and acidic residues. The segment at 1058 to 1092 (EGDEKKKRDSRRSGFLNLIKSRSRSERPPTVLMTE) is necessary for localization at the cell membrane. Ser-1096 carries the post-translational modification Phosphoserine. Basic and acidic residues-rich tracts occupy residues 1108-1132 (TTRK…KTPE) and 1141-1150 (EAGRAERSDS). A compositionally biased stretch (polar residues) spans 1191 to 1204 (VISQDPSSPVSCNT). Phosphothreonine is present on Thr-1229. The span at 1232–1244 (KNAKAEPRVDGGC) shows a compositional bias: basic and acidic residues. Residues 1245-1263 (RSRSSSSMPTSPKPLLQSP) show a composition bias toward low complexity. A phosphoserine mark is found at Ser-1281, Ser-1289, Ser-1291, Ser-1295, Ser-1319, Ser-1328, and Ser-1335. The span at 1317–1330 (QNSSQSSPRSFSQE) shows a compositional bias: low complexity. Basic and acidic residues predominate over residues 1343-1356 (QEQKQRSSGKDGHQ). Ser-1363 is modified (phosphoserine).

The protein belongs to the CARMIL family. In terms of assembly, homodimer. Interacts (via C-terminus) with heterodimeric capping protein (CP); this interaction uncaps barbed ends capped by CP, enhances barbed-end actin polymerization and promotes lamellipodial formation and cell migration. Interacts with MYO1E. Interacts with TRIO.

The protein resides in the cytoplasm. It localises to the cytoskeleton. It is found in the cell membrane. Its subcellular location is the cell projection. The protein localises to the lamellipodium. Its function is as follows. Cell membrane-cytoskeleton-associated protein that plays a role in the regulation of actin polymerization at the barbed end of actin filaments. Prevents F-actin heterodimeric capping protein (CP) activity at the leading edges of migrating cells, and hence generates uncapped barbed ends and enhances actin polymerization, however, seems unable to nucleate filaments. Plays a role in lamellipodial protrusion formations and cell migration. The polypeptide is F-actin-uncapping protein LRRC16A (Mus musculus (Mouse)).